The sequence spans 182 residues: Ribosome-recycling factor (182 aa).

Belongs to the RRF family.

The protein localises to the cytoplasm. Responsible for the release of ribosomes from messenger RNA at the termination of protein biosynthesis. May increase the efficiency of translation by recycling ribosomes from one round of translation to another. This is Ribosome-recycling factor from Prochlorococcus marinus (strain AS9601).